We begin with the raw amino-acid sequence, 122 residues long: Large ribosomal subunit protein uL14 (122 aa).

The protein belongs to the universal ribosomal protein uL14 family. As to quaternary structure, part of the 50S ribosomal subunit. Forms a cluster with proteins L3 and L19. In the 70S ribosome, L14 and L19 interact and together make contacts with the 16S rRNA in bridges B5 and B8.

Functionally, binds to 23S rRNA. Forms part of two intersubunit bridges in the 70S ribosome. This is Large ribosomal subunit protein uL14 from Bifidobacterium longum (strain DJO10A).